We begin with the raw amino-acid sequence, 604 residues long: Probable translation initiation factor IF-2 (604 aa).

The region spanning I18–M232 is the tr-type G domain. The tract at residues G27–T34 is G1. G27–T34 contributes to the GTP binding site. A G2 region spans residues A52–H56. Positions D88–G91 are G3. GTP-binding positions include D88–H92 and T142–D145. Residues T142–D145 form a G4 region. Positions S210 to H212 are G5.

The protein belongs to the TRAFAC class translation factor GTPase superfamily. Classic translation factor GTPase family. IF-2 subfamily.

Function in general translation initiation by promoting the binding of the formylmethionine-tRNA to ribosomes. Seems to function along with eIF-2. The polypeptide is Probable translation initiation factor IF-2 (Methanospirillum hungatei JF-1 (strain ATCC 27890 / DSM 864 / NBRC 100397 / JF-1)).